A 347-amino-acid chain; its full sequence is Ribosomal RNA large subunit methyltransferase M (347 aa).

S-adenosyl-L-methionine-binding positions include serine 184, alanine 217 to glycine 220, aspartate 236, aspartate 256, and aspartate 272. Lysine 301 (proton acceptor) is an active-site residue.

It belongs to the class I-like SAM-binding methyltransferase superfamily. RNA methyltransferase RlmE family. RlmM subfamily. Monomer.

The protein localises to the cytoplasm. The catalysed reaction is cytidine(2498) in 23S rRNA + S-adenosyl-L-methionine = 2'-O-methylcytidine(2498) in 23S rRNA + S-adenosyl-L-homocysteine + H(+). Its function is as follows. Catalyzes the 2'-O-methylation at nucleotide C2498 in 23S rRNA. This chain is Ribosomal RNA large subunit methyltransferase M, found in Xanthomonas campestris pv. campestris (strain 8004).